A 190-amino-acid polypeptide reads, in one-letter code: Photosynthetic NDH subunit of lumenal location 2, chloroplastic (190 aa).

The N-terminal 31 residues, 1 to 31 (MSSFTTTNTPPPYLLRKIYHRRVNQPFSVVC), are a transit peptide targeting the chloroplast. The N-terminal 37 residues, 32–68 (CTGEPQQDIFTRRRTLTSLITFTVIGGATSSALAQEK), are a transit peptide targeting the thylakoid. Coiled-coil stretches lie at residues 87–107 (EDAA…REML) and 139–159 (ESRR…MSEL).

Belongs to the PsbQ family. In terms of assembly, part of the chloroplast NDH complex, composed of a mixture of chloroplast and nucleus encoded subunits. Component of the NDH lumenal subcomplex, at least composed of PnsL1, PnsL2, PnsL3, PnsL4 and PnsL5.

The protein resides in the plastid. It is found in the chloroplast thylakoid membrane. Its function is as follows. NDH shuttles electrons from NAD(P)H:plastoquinone, via FMN and iron-sulfur (Fe-S) centers, to quinones in the photosynthetic chain and possibly in a chloroplast respiratory chain. The immediate electron acceptor for the enzyme in this species is believed to be plastoquinone. Couples the redox reaction to proton translocation, and thus conserves the redox energy in a proton gradient. Required for both formation and activity of the chloroplast NAD(P)H dehydrogenase (NDH) complex. The chain is Photosynthetic NDH subunit of lumenal location 2, chloroplastic from Arabidopsis thaliana (Mouse-ear cress).